Consider the following 147-residue polypeptide: 16 kDa phloem protein 2 (147 aa).

A C2 domain is found at 1–103 (MPHGTLEVVL…FVEGSIPPTA (103 aa)). Ca(2+) contacts are provided by aspartate 20, aspartate 26, aspartate 73, aspartate 75, and aspartate 81. The disordered stretch occupies residues 126–147 (ENRSRGMDEESYGGWKNSEASY).

It depends on Ca(2+) as a cofactor.

In terms of biological role, binds to both sense and antisense RNA. Can also bind sheared DNA and dodecamer DNA with a low affinity. Interacts with mesophyll plasmodesmata to mediate its own cell-to-cell transport and potentiate RNA trafficking. May play a role in plant defense signaling. This chain is 16 kDa phloem protein 2, found in Arabidopsis thaliana (Mouse-ear cress).